A 381-amino-acid chain; its full sequence is Creatine kinase M-type (381 aa).

In terms of domain architecture, Phosphagen kinase N-terminal spans 11-98 (KLNYKPEEEY…FDPIIQDRHG (88 aa)). The Phosphagen kinase C-terminal domain occupies 125–367 (YVLSSRVRTG…KLMVEMEKKL (243 aa)). Position 128 to 132 (128 to 132 (SSRVR)) interacts with ATP. Position 164 is a phosphoserine (Ser-164). Position 166 is a phosphothreonine (Thr-166). Ser-178 bears the Phosphoserine mark. Thr-180 bears the Phosphothreonine mark. Residue His-191 participates in ATP binding. A Phosphoserine modification is found at Ser-199. ATP-binding residues include Arg-236 and Arg-292. A phosphothreonine mark is found at Thr-313 and Thr-322. Residues 320–325 (RGTGGV) and Asp-335 contribute to the ATP site. A Phosphoserine modification is found at Ser-372.

Belongs to the ATP:guanido phosphotransferase family. As to quaternary structure, dimer of identical or non-identical chains, which can be either B (brain type) or M (muscle type). With MM being the major form in skeletal muscle and myocardium, MB existing in myocardium, and BB existing in many tissues, especially brain.

Its subcellular location is the cytoplasm. The enzyme catalyses creatine + ATP = N-phosphocreatine + ADP + H(+). In terms of biological role, reversibly catalyzes the transfer of phosphate between ATP and various phosphogens (e.g. creatine phosphate). Creatine kinase isoenzymes play a central role in energy transduction in tissues with large, fluctuating energy demands, such as skeletal muscle, heart, brain and spermatozoa. This chain is Creatine kinase M-type (CKM), found in Canis lupus familiaris (Dog).